The following is a 424-amino-acid chain: Kynureninase (424 aa).

Residues Leu-106, Thr-107, 134–137 (FPSD), Asp-219, His-222, and Tyr-244 each bind pyridoxal 5'-phosphate. Lys-245 bears the N6-(pyridoxal phosphate)lysine mark. Pyridoxal 5'-phosphate-binding residues include Trp-274 and Asn-302.

The protein belongs to the kynureninase family. Homodimer. Pyridoxal 5'-phosphate serves as cofactor.

It carries out the reaction L-kynurenine + H2O = anthranilate + L-alanine + H(+). It catalyses the reaction 3-hydroxy-L-kynurenine + H2O = 3-hydroxyanthranilate + L-alanine + H(+). The protein operates within amino-acid degradation; L-kynurenine degradation; L-alanine and anthranilate from L-kynurenine: step 1/1. It functions in the pathway cofactor biosynthesis; NAD(+) biosynthesis; quinolinate from L-kynurenine: step 2/3. Its function is as follows. Catalyzes the cleavage of L-kynurenine (L-Kyn) and L-3-hydroxykynurenine (L-3OHKyn) into anthranilic acid (AA) and 3-hydroxyanthranilic acid (3-OHAA), respectively. The chain is Kynureninase from Xanthomonas campestris pv. campestris (strain B100).